The chain runs to 605 residues: Insulin-like growth factor-binding protein complex acid labile subunit (605 aa).

Positions 1–27 (MALRKGGLALALLLLSWVALGPRSLEG) are cleaved as a signal peptide. One can recognise an LRRNT domain in the interval 32–74 (TPGEAEGPACPAACVCSYDDDADELSVFCSSRNLTRLPDGVPG). Intrachain disulfides connect C41/C47 and C45/C60. N-linked (GlcNAc...) asparagine glycans are attached at residues N64, N85, and N96. 19 LRR repeats span residues 75-96 (GTQA…AFQN), 99-120 (SLGF…ALLG), 123-144 (NLCH…TFAH), 147-168 (ALAS…LFEG), 171-192 (SLWD…AFRG), 195-216 (SLRE…LFSG), 219-240 (ELRE…VFVQ), 243-264 (RLQK…AFLG), 267-288 (ALRW…TFPG), 291-312 (GLRV…TFKD), 315-336 (FLEE…SFEG), 339-360 (QLEV…AFLG), 363-384 (NVAV…VFRG), 387-408 (KLHS…TFTG), 411-432 (GLRR…SLWG), 435-456 (ELLE…LFQG), 459-480 (KLEY…ALGP), 483-504 (RAFW…LLAP), and 507-528 (RLRY…PPGL). N368 carries an N-linked (GlcNAc...) asparagine glycan. N515 carries an N-linked (GlcNAc...) asparagine glycan. The LRRCT domain maps to 536 to 605 (NPWDCGCPLK…DLSEAHFAPC (70 aa)). 3 cysteine pairs are disulfide-bonded: C540–C583, C542–C605, and C566–C571. N-linked (GlcNAc...) asparagine glycosylation occurs at N580.

Forms a ternary complex with IGF1 and IGFBP3. As to expression, plasma.

The protein localises to the secreted. The protein resides in the extracellular space. Involved in protein-protein interactions that result in protein complexes, receptor-ligand binding or cell adhesion. In Homo sapiens (Human), this protein is Insulin-like growth factor-binding protein complex acid labile subunit (IGFALS).